Here is a 151-residue protein sequence, read N- to C-terminus: Meiotically up-regulated gene 114 protein (151 aa).

Its subcellular location is the cytoplasm. Has a role in meiosis. In Schizosaccharomyces pombe (strain 972 / ATCC 24843) (Fission yeast), this protein is Meiotically up-regulated gene 114 protein (mug114).